The sequence spans 381 residues: Malonyl-CoA-acyl carrier protein transacylase, mitochondrial (381 aa).

Residues Ser-151 and His-268 contribute to the active site. Lys-312 carries the post-translational modification N6-succinyllysine.

This sequence belongs to the type II malonyltransferase family. As to expression, expressed in retinal ganglion cells.

The protein resides in the mitochondrion. The enzyme catalyses holo-[ACP] + malonyl-CoA = malonyl-[ACP] + CoA. The protein operates within lipid metabolism; fatty acid biosynthesis. Catalyzes the transfer of a malonyl moiety from malonyl-CoA to the free thiol group of the phosphopantetheine arm of the mitochondrial ACP protein (NDUFAB1). This suggests the existence of the biosynthesis of fatty acids in mitochondria. This is Malonyl-CoA-acyl carrier protein transacylase, mitochondrial from Mus musculus (Mouse).